A 740-amino-acid polypeptide reads, in one-letter code: Putative Pol polyprotein from transposon element Bs1 (740 aa).

The stretch at 469–503 (TAVAHNLLVQALFMDGRASDAYVVLEEMQNNGPFP) is one PPR repeat.

Its function is as follows. Bs1 is probably an active plant retrotransposon. The protein is Putative Pol polyprotein from transposon element Bs1 of Zea mays (Maize).